Here is a 545-residue protein sequence, read N- to C-terminus: Oligopeptide-binding protein OppA (545 aa).

The signal sequence occupies residues 1-20 (MKKRWSIVTLMLIFTLVLSA). Cysteine 21 carries N-palmitoyl cysteine lipidation. Cysteine 21 carries the S-diacylglycerol cysteine lipid modification. The residue at position 470 (threonine 470) is a Phosphothreonine.

It belongs to the bacterial solute-binding protein 5 family. The complex is composed of two ATP-binding proteins (OppD and OppF), two transmembrane proteins (OppB and OppC) and a solute-binding protein (OppA). OppA interacts with FloT in detergent-resistant membranes (DRM). Colocalizes rarely with FloT membrane assemblies.

It localises to the cell membrane. It is found in the membrane raft. Part of the ABC transporter complex OppABCDF involved in the uptake of oligopeptides. Plays an important nutritional role. Binds peptides containing up to five amino acids residues regardless of their sequence, with highest affinity for tetra- and pentapeptides. Binds to the sporulation-promoting peptide PhrE (Ser-Arg-Asn-Val-Thr). Required for sporulation and genetic competence. This chain is Oligopeptide-binding protein OppA, found in Bacillus subtilis (strain 168).